A 130-amino-acid polypeptide reads, in one-letter code: S-adenosylmethionine decarboxylase proenzyme (130 aa).

Ser63 serves as the catalytic Schiff-base intermediate with substrate; via pyruvic acid. The residue at position 63 (Ser63) is a Pyruvic acid (Ser); by autocatalysis. Catalysis depends on His68, which acts as the Proton acceptor; for processing activity. Cys83 acts as the Proton donor; for catalytic activity in catalysis.

It belongs to the prokaryotic AdoMetDC family. Type 1 subfamily. As to quaternary structure, heterotetramer of two alpha and two beta chains arranged as a dimer of alpha/beta heterodimers. Pyruvate is required as a cofactor. Post-translationally, is synthesized initially as an inactive proenzyme. Formation of the active enzyme involves a self-maturation process in which the active site pyruvoyl group is generated from an internal serine residue via an autocatalytic post-translational modification. Two non-identical subunits are generated from the proenzyme in this reaction, and the pyruvate is formed at the N-terminus of the alpha chain, which is derived from the carboxyl end of the proenzyme. The post-translation cleavage follows an unusual pathway, termed non-hydrolytic serinolysis, in which the side chain hydroxyl group of the serine supplies its oxygen atom to form the C-terminus of the beta chain, while the remainder of the serine residue undergoes an oxidative deamination to produce ammonia and the pyruvoyl group blocking the N-terminus of the alpha chain.

It carries out the reaction S-adenosyl-L-methionine + H(+) = S-adenosyl 3-(methylsulfanyl)propylamine + CO2. The protein operates within amine and polyamine biosynthesis; S-adenosylmethioninamine biosynthesis; S-adenosylmethioninamine from S-adenosyl-L-methionine: step 1/1. Catalyzes the decarboxylation of S-adenosylmethionine to S-adenosylmethioninamine (dcAdoMet), the propylamine donor required for the synthesis of the polyamines spermine and spermidine from the diamine putrescine. This is S-adenosylmethionine decarboxylase proenzyme (speH) from Thermotoga maritima (strain ATCC 43589 / DSM 3109 / JCM 10099 / NBRC 100826 / MSB8).